Consider the following 209-residue polypeptide: Nucleoside triphosphate pyrophosphatase (209 aa).

The Proton acceptor role is filled by aspartate 74.

This sequence belongs to the Maf family. Requires a divalent metal cation as cofactor.

It is found in the cytoplasm. It carries out the reaction a ribonucleoside 5'-triphosphate + H2O = a ribonucleoside 5'-phosphate + diphosphate + H(+). It catalyses the reaction a 2'-deoxyribonucleoside 5'-triphosphate + H2O = a 2'-deoxyribonucleoside 5'-phosphate + diphosphate + H(+). Functionally, nucleoside triphosphate pyrophosphatase. May have a dual role in cell division arrest and in preventing the incorporation of modified nucleotides into cellular nucleic acids. The polypeptide is Nucleoside triphosphate pyrophosphatase (Neorickettsia sennetsu (strain ATCC VR-367 / Miyayama) (Ehrlichia sennetsu)).